The sequence spans 122 residues: Large ribosomal subunit protein uL14 (122 aa).

This sequence belongs to the universal ribosomal protein uL14 family. In terms of assembly, part of the 50S ribosomal subunit. Forms a cluster with proteins L3 and L19. In the 70S ribosome, L14 and L19 interact and together make contacts with the 16S rRNA in bridges B5 and B8.

In terms of biological role, binds to 23S rRNA. Forms part of two intersubunit bridges in the 70S ribosome. The protein is Large ribosomal subunit protein uL14 of Paramagnetospirillum magneticum (strain ATCC 700264 / AMB-1) (Magnetospirillum magneticum).